The chain runs to 193 residues: Ion-translocating oxidoreductase complex subunit A (193 aa).

6 helical membrane passes run 5–25 (LLLF…FLGL), 47–67 (FVMT…LVPL), 72–92 (LRTM…EMVV), 102–122 (LLGI…VALL), 134–154 (ALYG…FAAI), and 171–191 (AIAL…SGLV).

It belongs to the NqrDE/RnfAE family. As to quaternary structure, the complex is composed of six subunits: RnfA, RnfB, RnfC, RnfD, RnfE and RnfG.

The protein localises to the cell inner membrane. Its function is as follows. Part of a membrane-bound complex that couples electron transfer with translocation of ions across the membrane. This is Ion-translocating oxidoreductase complex subunit A from Cronobacter sakazakii (strain ATCC BAA-894) (Enterobacter sakazakii).